We begin with the raw amino-acid sequence, 344 residues long: Arginine N-succinyltransferase (344 aa).

L125 contributes to the succinyl-CoA binding site. H229 serves as the catalytic Proton donor.

The protein belongs to the arginine N-succinyltransferase family.

It carries out the reaction succinyl-CoA + L-arginine = N(2)-succinyl-L-arginine + CoA + H(+). It participates in amino-acid degradation; L-arginine degradation via AST pathway; L-glutamate and succinate from L-arginine: step 1/5. In terms of biological role, catalyzes the transfer of succinyl-CoA to arginine to produce N(2)-succinylarginine. This is Arginine N-succinyltransferase from Escherichia fergusonii (strain ATCC 35469 / DSM 13698 / CCUG 18766 / IAM 14443 / JCM 21226 / LMG 7866 / NBRC 102419 / NCTC 12128 / CDC 0568-73).